The chain runs to 178 residues: CCHC-type zinc finger nucleic acid binding protein (178 aa).

The residue at position 2 (Ser2) is an N-acetylserine. A CCHC-type 1 zinc finger spans residues 4–21 (NECFKCGRSGHWARECPT). Residue Lys8 is modified to N6-acetyllysine. Omega-N-methylarginine; by PRMT1 is present on residues Arg25 and Arg27. Residues 25-38 (RGRGMRSRGRGGFT) form an RNA-binding Arg/Gly-rich region (RGG-box) region. Omega-N-methylarginine is present on residues Arg32 and Arg34. At Ser49 the chain carries Phosphoserine. CCHC-type zinc fingers lie at residues 52 to 69 (DICY…DCDL), 72 to 90 (DEAC…DCKE), 97 to 114 (QCCY…DCDH), 118 to 135 (QKCY…DCTK), 136 to 153 (VKCY…NCSK), and 157 to 174 (VNCY…ECTI). Omega-N-methylarginine is present on residues Asp72, Gly79, and Arg80.

In terms of assembly, associates with the 40S ribosomal subunit, the 80S ribosome and with polysomes. Post-translationally, arginine methylation by PRMT1 in the Arg/Gly-rich region impedes RNA binding.

It is found in the nucleus. It localises to the cytoplasm. The protein resides in the endoplasmic reticulum. Single-stranded DNA-binding protein that preferentially binds to the sterol regulatory element (SRE) sequence 5'-GTGCGGTG-3', and thereby mediates transcriptional repression. Has a role as transactivator of the Myc promoter. Binds single-stranded RNA in a sequence-specific manner. Binds G-rich elements in target mRNA coding sequences. Prevents G-quadruplex structure formation in vitro, suggesting a role in supporting translation by resolving stable structures on mRNAs. The protein is CCHC-type zinc finger nucleic acid binding protein of Mus musculus (Mouse).